Reading from the N-terminus, the 141-residue chain is Hemoglobin subunit alpha-1 (141 aa).

The region spanning 1–141 (VLSPEDKNNV…VSTVLTSKYR (141 aa)) is the Globin domain. An O2-binding site is contributed by H58. H87 contacts heme b.

This sequence belongs to the globin family. In terms of assembly, heterotetramer of two alpha chains and two beta chains. In terms of tissue distribution, red blood cells.

Its function is as follows. Involved in oxygen transport from the lung to the various peripheral tissues. This is Hemoglobin subunit alpha-1 from Tadarida brasiliensis (Brazilian free-tailed bat).